The chain runs to 822 residues: Aminopeptidase O (822 aa).

His-480 is a Zn(2+) binding site. Glu-481 (proton acceptor) is an active-site residue. 2 residues coordinate Zn(2+): His-484 and Glu-503. The Nucleolar localization signal signature appears at 692–702 (RRPGKRQRRKR).

It belongs to the peptidase M1 family. It depends on Zn(2+) as a cofactor.

Its subcellular location is the nucleus. It localises to the nucleolus. In terms of biological role, aminopeptidase which catalyzes the hydrolysis of amino acid residues from the N-terminus of peptide or protein substrates. This is Aminopeptidase O (Aopep) from Rattus norvegicus (Rat).